Consider the following 71-residue polypeptide: Small ribosomal subunit protein bS21 (71 aa).

The protein belongs to the bacterial ribosomal protein bS21 family.

This Pseudoalteromonas atlantica (strain T6c / ATCC BAA-1087) protein is Small ribosomal subunit protein bS21.